The following is a 112-amino-acid chain: Putative movement protein (112 aa).

Residues Ile27–Cys47 traverse the membrane as a helical segment. Residues Thr77–Ser112 form a disordered region. Residues Thr84–Glu98 show a composition bias toward basic and acidic residues. A compositionally biased stretch (polar residues) spans Asn101 to Ser112.

Belongs to the nanovirus movement protein family.

Its subcellular location is the host cell membrane. In terms of biological role, may transport viral genome to neighboring plant cells directly through plasmosdesmata, without any budding. The movement protein allows efficient cell to cell propagation, by bypassing the host cell wall barrier. The protein is Putative movement protein (DNA-M) of Subterranean clover stunt virus (strain F) (SCSV).